A 523-amino-acid polypeptide reads, in one-letter code: Sensory neuron membrane protein 1 (523 aa).

Residues 1–11 (MQLPRELKYAA) lie on the Cytoplasmic side of the membrane. Residues 12–32 (IAGGVALFGLIFGWVLFPTIL) traverse the membrane as a helical segment. Residues 33–458 (KSQLKKEMAL…HQLFIPKRVV (426 aa)) lie on the Extracellular side of the membrane. N-linked (GlcNAc...) asparagine glycans are attached at residues Asn-67 and Asn-229. 3 cysteine pairs are disulfide-bonded: Cys-268–Cys-333, Cys-297–Cys-352, and Cys-335–Cys-341. The N-linked (GlcNAc...) asparagine glycan is linked to Asn-440. The chain crosses the membrane as a helical span at residues 459-479 (GVLRWWMVSFGSLGAVIGIVF). Over 480-523 (HFRDHIMRLAVSGDTKVSKVTPEEEEQKDISVIGQAQEPAKVNI) the chain is Cytoplasmic.

Belongs to the CD36 family.

Its subcellular location is the cell membrane. Functionally, plays an olfactory role that is not restricted to pheromone sensitivity. This Helicoverpa armigera (Cotton bollworm) protein is Sensory neuron membrane protein 1.